A 197-amino-acid chain; its full sequence is Dephospho-CoA kinase (197 aa).

A DPCK domain is found at 2 to 197 (IIGLTGGIGS…HTKYMELLNE (196 aa)). 10 to 15 (GSGKSA) is an ATP binding site.

The protein belongs to the CoaE family.

The protein localises to the cytoplasm. It carries out the reaction 3'-dephospho-CoA + ATP = ADP + CoA + H(+). The protein operates within cofactor biosynthesis; coenzyme A biosynthesis; CoA from (R)-pantothenate: step 5/5. Its function is as follows. Catalyzes the phosphorylation of the 3'-hydroxyl group of dephosphocoenzyme A to form coenzyme A. This chain is Dephospho-CoA kinase, found in Gamma-proteobacterium EBAC31A08.